The following is a 115-amino-acid chain: UPF0212 protein MJ0068 (115 aa).

This sequence belongs to the UPF0212 family.

In Methanocaldococcus jannaschii (strain ATCC 43067 / DSM 2661 / JAL-1 / JCM 10045 / NBRC 100440) (Methanococcus jannaschii), this protein is UPF0212 protein MJ0068.